We begin with the raw amino-acid sequence, 974 residues long: MILKTAFSLPTPTTTLLSPSSPHQLNTLFFTRRRRRLISPSRLNSIFSQRRFSFSAAASGNNVFTSPETSKTFDFSSEEKIYKWWESQGYFKPNFDQGGSPFVIPMPPPNVTGSLHMGHAMFVTLEDIMVRYNRMNGRPTLWLPGTDHAGIATQLVVEKMLASEGIKRVDLGRDEFTKRVWEWKEKYGGTITNQIKRLGASCDWSRERFTLDEQLSRAVVEAFVKLHDKGLIYQGSYMVNWSPNLQTAVSDLEVEYSEEPGFLYHIKYRVAGSPDFLTIATTRPETLFGDVALAVHPEDDRYSKYVGQTAIVPMTYGRHVPIIADKYVDKDFGTGVLKISPGHDHNDYLLARKLGLPILNVMNKDATLNDVAGLFCGLDRFEVREKLWADLEEIGLAVKKEPHTLRVPRSQRGGEVIEPLVSKQWFVHMDPLAEKALLAVENKELTIIPERFEKIYNHWLTNIKDWCISRQLWWGHRIPVWYVVGKDCEEDYIVAKSAEEALEKALEKYGKDVEIYQDPDVLDTWFSSSLWPFSTLGWPDVAAKDFNNFYPTNMLETGHDILFFWVARMVMMGIEFTGTVPFSHVYLHGLIRDSQGRKMSKSLGNVIDPLDTIKDFGTDALRFTIALGTAGQDLNLSTERLTANKAFTNKLWNAGKFVLHSLPSLSDTSAWENLLDLKLDKEETLLSLPLPECWAVSKLHILIDSVTASYEKLFFGDVGRETYDFFWSDFADWYIEASKSRLYGSGGNSVSLASQAVLLYVFENILKLLHPFMPFVTEDLWQALPYRKEALIVSPWPQNSLPRNVESIKRFENLQALTRAIRNARAEYSVEPVKRISASVVGSAEVIEYISKEKEVLALLSRLDLNNVHFSNAPPGDANLSVHLVASEGLEAYLPLAAMVDISSEVQRISKRLSKMQTEYDALITRLSSPKFVEKAPEEVVRGVKEQVEELEEKIKLTKARLDFLKSTTSLVSQ.

Positions 109 to 119 (PNVTGSLHMGH) match the 'HIGH' region motif. An LRR 1 repeat occupies 432–454 (LAEKALLAVENKELTIIPERFEK). A coiled-coil region spans residues 489-518 (EEDYIVAKSAEEALEKALEKYGKDVEIYQD). The 'KMSKS' region motif lies at 598–602 (KMSKS). ATP is bound at residue lysine 601. An LRR 2 repeat occupies 857–880 (LALLSRLDLNNVHFSNAPPGDANL).

Belongs to the class-I aminoacyl-tRNA synthetase family.

The protein localises to the plastid. It is found in the chloroplast. The protein resides in the mitochondrion. It carries out the reaction tRNA(Val) + L-valine + ATP = L-valyl-tRNA(Val) + AMP + diphosphate. The protein is Valine--tRNA ligase, chloroplastic/mitochondrial 2 of Arabidopsis thaliana (Mouse-ear cress).